The chain runs to 349 residues: Isopentenyl-diphosphate delta-isomerase (349 aa).

9–10 (RK) contacts substrate. Residues 65 to 67 (AMT), Ser95, and Asn124 contribute to the FMN site. 95 to 97 (STH) is a binding site for substrate. Residue Gln154 coordinates substrate. Position 155 (Glu155) interacts with Mg(2+). Residues Lys186, Ser211, Thr216, 262–264 (GLR), and 283–284 (SR) each bind FMN.

It belongs to the IPP isomerase type 2 family. As to quaternary structure, homooctamer. Dimer of tetramers. It depends on FMN as a cofactor. The cofactor is NADPH. Mg(2+) serves as cofactor.

The protein localises to the cytoplasm. It catalyses the reaction isopentenyl diphosphate = dimethylallyl diphosphate. Involved in the biosynthesis of isoprenoids. Catalyzes the 1,3-allylic rearrangement of the homoallylic substrate isopentenyl (IPP) to its allylic isomer, dimethylallyl diphosphate (DMAPP). The sequence is that of Isopentenyl-diphosphate delta-isomerase from Staphylococcus aureus (strain JH1).